We begin with the raw amino-acid sequence, 219 residues long: uncharacterized protein (219 aa).

The segment covering 139 to 154 (PRKIKQKKKTKKKRPS) has biased composition (basic residues). The segment at 139-160 (PRKIKQKKKTKKKRPSKSAPKT) is disordered. Residues 159 to 217 (KTYTVKKGDTLWDLAGKFYGDSTKWRKIWKVNKKAMIKRSKRNIRQPGHWIFPGQKLKI) form the LysM domain.

This is an uncharacterized protein from Bacillus subtilis (strain 168).